Reading from the N-terminus, the 526-residue chain is Histidine ammonia-lyase (526 aa).

Positions 143–145 (ASG) form a cross-link, 5-imidazolinone (Ala-Gly). Serine 144 carries the 2,3-didehydroalanine (Ser) modification.

The protein belongs to the PAL/histidase family. Post-translationally, contains an active site 4-methylidene-imidazol-5-one (MIO), which is formed autocatalytically by cyclization and dehydration of residues Ala-Ser-Gly.

The protein localises to the cytoplasm. The enzyme catalyses L-histidine = trans-urocanate + NH4(+). The protein operates within amino-acid degradation; L-histidine degradation into L-glutamate; N-formimidoyl-L-glutamate from L-histidine: step 1/3. The protein is Histidine ammonia-lyase of Aromatoleum aromaticum (strain DSM 19018 / LMG 30748 / EbN1) (Azoarcus sp. (strain EbN1)).